A 245-amino-acid chain; its full sequence is E3 ubiquitin-protein ligase RNF138 (245 aa).

Ala-2 carries the N-acetylalanine modification. Residues 18 to 58 form an RING-type zinc finger; the sequence is CPVCQEVLKTPVRTAACQHVFCRKCFLTAMRESGIHCPLCR. Positions 86, 89, 101, and 105 each coordinate Zn(2+). The C2HC RNF-type zinc-finger motif lies at 86 to 105; that stretch reads CRCCAKQIKFYRMRHHYKSC. A disordered region spans residues 128 to 153; that stretch reads VGNSNRSETSASDNIETYQENTGSSG. 2 consecutive C2H2-type zinc fingers follow at residues 157-180 and 187-215; these read FKCP…NSNH and VTCP…NQRH. Residues 225-243 form the UIM domain; the sequence is LQLDEETQYQTAVEESFQV.

In terms of assembly, interacts with NLK. Interacts with XRCC5/Ku80. Interacts with RBBP8/CtIP. Post-translationally, auto-ubiquitinated.

Its subcellular location is the chromosome. It carries out the reaction S-ubiquitinyl-[E2 ubiquitin-conjugating enzyme]-L-cysteine + [acceptor protein]-L-lysine = [E2 ubiquitin-conjugating enzyme]-L-cysteine + N(6)-ubiquitinyl-[acceptor protein]-L-lysine.. It participates in protein modification; protein ubiquitination. Functionally, E3 ubiquitin-protein ligase involved in DNA damage response by promoting DNA resection and homologous recombination. Recruited to sites of double-strand breaks following DNA damage and specifically promotes double-strand break repair via homologous recombination. Two different, non-exclusive, mechanisms have been proposed. According to a report, regulates the choice of double-strand break repair by favoring homologous recombination over non-homologous end joining (NHEJ): acts by mediating ubiquitination of XRCC5/Ku80, leading to remove the Ku complex from DNA breaks, thereby promoting homologous recombination. According to another report, cooperates with UBE2Ds E2 ubiquitin ligases (UBE2D1, UBE2D2, UBE2D3 or UBE2D4) to promote homologous recombination by mediating ubiquitination of RBBP8/CtIP. Together with NLK, involved in the ubiquitination and degradation of TCF/LEF. Also exhibits auto-ubiquitination activity in combination with UBE2K. May act as a negative regulator in the Wnt/beta-catenin-mediated signaling pathway. The polypeptide is E3 ubiquitin-protein ligase RNF138 (RNF138) (Bos taurus (Bovine)).